Reading from the N-terminus, the 1770-residue chain is Vitellogenin (1770 aa).

The N-terminal stretch at 1–16 (MLLLLTLLLFAGTVAA) is a signal peptide. Residues 22-809 (WQVGNEYTYL…SEDSVIPRIL (788 aa)) form the Vitellogenin domain. A disulfide bridge links cysteine 178 with cysteine 222. N-linked (GlcNAc...) asparagine glycosylation occurs at asparagine 296. Residues 373–394 (SSSSSISSSEENDFWQPKPTLE) are disordered. N-linked (GlcNAc...) asparagine glycosylation occurs at asparagine 1067. Residues 1442-1635 (TSCMLDKTRA…SYALISNQCE (194 aa)) form the VWFD domain. Disulfide bonds link cysteine 1444–cysteine 1598 and cysteine 1466–cysteine 1634.

Accumulates in the hemolymph. Represents up to 70% of the queen's hemolymph proteins. During the first week of the worker adult life, when it becomes a nurse bee and performs brood-rearing tasks, the vitellogenin titer increases and may account for up to 40% of the total hemolymph proteins.

The protein resides in the secreted. Precursor of the egg-yolk proteins that are sources of nutrients during embryonic development. Involved in the differentiation of honeybee larvae into queens. The polypeptide is Vitellogenin (Vg) (Apis mellifera (Honeybee)).